A 729-amino-acid polypeptide reads, in one-letter code: Fatty acid oxidation complex subunit alpha (729 aa).

Residues 1-189 are enoyl-CoA hydratase/isomerase; it reads MLYQSETLQL…KIGLVDAVVD (189 aa). Asp-296 serves as a coordination point for substrate. The interval 311–729 is 3-hydroxyacyl-CoA dehydrogenase; that stretch reads AAPKLAAVLG…LLDVSTNQPA (419 aa). Residues Met-324, Asp-343, 400-402, Lys-407, and Ser-429 each bind NAD(+); that span reads VVE. The For 3-hydroxyacyl-CoA dehydrogenase activity role is filled by His-450. Residue Asn-453 participates in NAD(+) binding. 2 residues coordinate substrate: Asn-500 and Tyr-660.

It in the N-terminal section; belongs to the enoyl-CoA hydratase/isomerase family. The protein in the C-terminal section; belongs to the 3-hydroxyacyl-CoA dehydrogenase family. As to quaternary structure, heterotetramer of two alpha chains (FadB) and two beta chains (FadA).

It catalyses the reaction a (3S)-3-hydroxyacyl-CoA + NAD(+) = a 3-oxoacyl-CoA + NADH + H(+). It carries out the reaction a (3S)-3-hydroxyacyl-CoA = a (2E)-enoyl-CoA + H2O. The enzyme catalyses a 4-saturated-(3S)-3-hydroxyacyl-CoA = a (3E)-enoyl-CoA + H2O. The catalysed reaction is (3S)-3-hydroxybutanoyl-CoA = (3R)-3-hydroxybutanoyl-CoA. It catalyses the reaction a (3Z)-enoyl-CoA = a 4-saturated (2E)-enoyl-CoA. It carries out the reaction a (3E)-enoyl-CoA = a 4-saturated (2E)-enoyl-CoA. It participates in lipid metabolism; fatty acid beta-oxidation. Involved in the aerobic and anaerobic degradation of long-chain fatty acids via beta-oxidation cycle. Catalyzes the formation of 3-oxoacyl-CoA from enoyl-CoA via L-3-hydroxyacyl-CoA. It can also use D-3-hydroxyacyl-CoA and cis-3-enoyl-CoA as substrate. This chain is Fatty acid oxidation complex subunit alpha, found in Yersinia pseudotuberculosis serotype IB (strain PB1/+).